The chain runs to 439 residues: Protease Do-like 1, chloroplastic (439 aa).

The tract at residues 154-323 is serine protease; it reads QGSGSGFVWD…IPVDTVGGIV (170 aa). Catalysis depends on charge relay system residues His-173, Asp-203, and Ser-282. One can recognise a PDZ domain in the interval 326–423; sequence LVRFGKVTRP…EVTVEVLRGD (98 aa).

It belongs to the peptidase S1C family. Interacts with PTAC16 and other potential targets for degradation under high light conditions.

It localises to the plastid. It is found in the chloroplast thylakoid membrane. Inhibited by phenylmethylsulfonyl fluoride and O-phenanthroline. Serine protease that is required at high temperature. May be involved in the degradation of damaged proteins. In vivo, can degrade beta-casein. The sequence is that of Protease Do-like 1, chloroplastic (DEGP1) from Arabidopsis thaliana (Mouse-ear cress).